Consider the following 501-residue polypeptide: MDLVLLEKALLGLFAAAVLAVAVAKLTGKRYRLPPGPAGAPVVGNWLQVGDDLNHRNLMSLAKRFGDIFLLRMGVRNLVVVSTPELAKEVLHTQGVEFGSRTRNVVFDIFTGKGQDMVFTVYGDHWRKMRRIMTVPFFTNKVVAQNRVGWEEEARLVVEDVRKDPRAAAEGVVIRRRLQLMMYNDMFRIMFDTRFESEQDPLFNKLKALNAERSRLSQSFEYNYGDFIPVLRPFLRGYLNRCHDLKTRRMKVFEDNFVQERKKVMAQTGEIRCAMDHILEAERKGEINHDNVLYIVENINVAAIETTLWSIEWGIAELVNHPAIQSKLREEMDSVLGAGVPVTEPDLERLPYLQAIVKETLRLRMAIPLLVPHMNLNDGKLAGYDIPAESKILVNAWFLANDPKRWVRPDEFRPERFLEEEKTVEAHGNDFRFVPFGVGRRSCPGIILALPIIGITLGRLVQNFQLLPPPGQDKIDTTEKPGQFSNQIAKHATIVCKPLEA.

Residues 3–23 (LVLLEKALLGLFAAAVLAVAV) form a helical membrane-spanning segment. (E)-cinnamate contacts are provided by residues 213–218 (RSRLSQ) and A302. C443 contributes to the heme binding site.

Belongs to the cytochrome P450 family. Heme serves as cofactor.

It localises to the membrane. The catalysed reaction is (E)-cinnamate + reduced [NADPH--hemoprotein reductase] + O2 = (E)-4-coumarate + oxidized [NADPH--hemoprotein reductase] + H2O + H(+). Its pathway is phenylpropanoid metabolism; trans-4-coumarate biosynthesis; trans-4-coumarate from trans-cinnamate: step 1/1. Its function is as follows. Catalyzes the first oxidative step of the phenylpropanoid pathway in higher plants by transforming trans-cinnamate into p-coumarate. The compounds formed by this pathway are essential components for lignification, pollination, and defense against ultraviolet light, predators and pathogens. Can also use 2-naphthoic acid as substrate. This Sorghum bicolor (Sorghum) protein is Trans-cinnamate 4-monooxygenase.